We begin with the raw amino-acid sequence, 324 residues long: Probable metal transport system membrane protein CPn_0346/CP_0414/CPj0346/CpB0353 (324 aa).

The next 10 helical transmembrane spans lie at 1 to 21 (MALG…SVFF), 39 to 59 (IQII…TFLV), 64 to 84 (AMYA…VCLF), 94 to 114 (GTLT…IYFI), 125 to 145 (STAL…VFMT), 165 to 185 (EDIF…IFAF), 201 to 221 (LGIP…ACLV), 226 to 246 (AVGV…AKVI), 252 to 272 (SLMA…PASS), and 286 to 306 (SGIS…ISYF).

It belongs to the ABC-3 integral membrane protein family.

Its subcellular location is the cell inner membrane. In terms of biological role, part of an ATP-driven transport system CPn_0346/CPn_0347/CPn_0348/CPn_0349 for a metal. In Chlamydia pneumoniae (Chlamydophila pneumoniae), this protein is Probable metal transport system membrane protein CPn_0346/CP_0414/CPj0346/CpB0353.